The primary structure comprises 411 residues: tRNA pseudouridine synthase Pus10 (411 aa).

One can recognise a THUMP domain in the interval A65–P192. The active-site Nucleophile is the D244. Substrate is bound by residues Y305 and Y376.

The protein belongs to the pseudouridine synthase Pus10 family.

The catalysed reaction is uridine(54) in tRNA = pseudouridine(54) in tRNA. It carries out the reaction uridine(55) in tRNA = pseudouridine(55) in tRNA. Its function is as follows. Responsible for synthesis of pseudouridine from uracil-54 and uracil-55 in the psi GC loop of transfer RNAs. The polypeptide is tRNA pseudouridine synthase Pus10 (Pyrobaculum arsenaticum (strain DSM 13514 / JCM 11321 / PZ6)).